Consider the following 225-residue polypeptide: Probable proteasome subunit beta type-6 (225 aa).

The protein belongs to the peptidase T1B family. In terms of assembly, the 26S proteasome consists of a 20S proteasome core and two 19S regulatory subunits. The 20S proteasome core is composed of 28 subunits that are arranged in four stacked rings, resulting in a barrel-shaped structure. The two end rings are each formed by seven alpha subunits, and the two central rings are each formed by seven beta subunits. The catalytic chamber with the active sites is on the inside of the barrel.

Its subcellular location is the cytoplasm. The protein resides in the nucleus. In terms of biological role, non-catalytic component of the proteasome, a multicatalytic proteinase complex which is characterized by its ability to cleave peptides with Arg, Phe, Tyr, Leu, and Glu adjacent to the leaving group at neutral or slightly basic pH. The proteasome has an ATP-dependent proteolytic activity. The chain is Probable proteasome subunit beta type-6 (pam1) from Schizosaccharomyces pombe (strain 972 / ATCC 24843) (Fission yeast).